The primary structure comprises 213 residues: Small ribosomal subunit protein eS1 (213 aa).

The tract at residues 189 to 213 (ARPEEVAAEEETAVDVDEEDVDVEA) is disordered. The span at 194-213 (VAAEEETAVDVDEEDVDVEA) shows a compositional bias: acidic residues.

Belongs to the eukaryotic ribosomal protein eS1 family.

This is Small ribosomal subunit protein eS1 from Haloarcula marismortui (strain ATCC 43049 / DSM 3752 / JCM 8966 / VKM B-1809) (Halobacterium marismortui).